A 538-amino-acid polypeptide reads, in one-letter code: Syncytin-1 (538 aa).

An N-terminal signal peptide occupies residues 1-20 (MALPYHIFLFTVLLPSFTLT). Over 21–443 (APPPCRCMTS…NIGPWGLFSQ (423 aa)) the chain is Extracellular. Residue N169 is glycosylated (N-linked (GlcNAc...) asparagine). The short motif at 186–189 (CWMC) is the CXXC element. 3 disulfide bridges follow: C186/C189, C186/C405, and C397/C404. 6 N-linked (GlcNAc...) asparagine glycosylation sites follow: N208, N214, N234, N242, N245, and N281. A fusion peptide region spans residues 320 to 340 (ILPFVMAAGVLGALGTGIGGI). The interval 380–396 (LQNRRALDLLTAERGGT) is immunosuppression. The short motif at 397 to 405 (CLFLGEECC) is the CX6CC element. N-linked (GlcNAc...) asparagine glycosylation is present at N409. Residues 444-464 (WMPWILPFLGPLAAIILLLLF) traverse the membrane as a helical segment. Residues 465–484 (GPCIFNLLVNFVSSRIEAVK) form an essential for the fusiogenic function region. Residues 465 to 538 (GPCIFNLLVN…LLRPNSAGSS (74 aa)) lie on the Cytoplasmic side of the membrane. Residues 501–538 (PLDWPASPRSDVNDIKGTPPEEISTAQPLLRPNSAGSS) are disordered.

The protein belongs to the gamma type-C retroviral envelope protein family. HERV class-I W env subfamily. The mature envelope protein (Env) consists of a trimer of SU-TM heterodimers attached probably by a labile interchain disulfide bond. Interacts with the C-type lectin CD209/DC-SIGN. In terms of processing, specific enzymatic cleavages in vivo yield mature proteins. Envelope glycoproteins are synthesized as an inactive precursor that is heavily N-glycosylated and processed likely by furin in the Golgi to yield the mature SU and TM proteins. The cleavage site between SU and TM requires the minimal sequence [KR]-X-[KR]-R. Post-translationally, the CXXC motif is highly conserved across a broad range of retroviral envelope proteins. It is thought to participate in the formation of a labile disulfide bond possibly with the CX6CC motif present in the transmembrane protein.

It localises to the cell membrane. It is found in the virion. Its function is as follows. This endogenous retroviral envelope protein has retained its original fusogenic properties and participates in trophoblast fusion and the formation of a syncytium during placenta morphogenesis. May recognize and induce fusion through binding of SLC1A4 and SLC1A5. Functionally, endogenous envelope proteins may have kept, lost or modified their original function during evolution. Retroviral envelope proteins mediate receptor recognition and membrane fusion during early infection. The surface protein (SU) mediates receptor recognition, while the transmembrane protein (TM) acts as a class I viral fusion protein. The protein may have at least 3 conformational states: pre-fusion native state, pre-hairpin intermediate state, and post-fusion hairpin state. During viral and target cell membrane fusion, the coiled coil regions (heptad repeats) assume a trimer-of-hairpins structure, positioning the fusion peptide in close proximity to the C-terminal region of the ectodomain. The formation of this structure appears to drive apposition and subsequent fusion of membranes. This chain is Syncytin-1 (ERVW-1), found in Pongo pygmaeus (Bornean orangutan).